A 476-amino-acid chain; its full sequence is Bifunctional protein HldE (476 aa).

Residues 1 to 318 are ribokinase; it reads MKLDLTVLEQ…YTALHGDKLA (318 aa). 195–198 contacts ATP; that stretch reads NLGE. Residue aspartate 264 is part of the active site. The tract at residues 344–476 is cytidylyltransferase; it reads MTNGCFDILH…MIDTILDREG (133 aa).

It in the N-terminal section; belongs to the carbohydrate kinase PfkB family. This sequence in the C-terminal section; belongs to the cytidylyltransferase family. In terms of assembly, homodimer.

The catalysed reaction is D-glycero-beta-D-manno-heptose 7-phosphate + ATP = D-glycero-beta-D-manno-heptose 1,7-bisphosphate + ADP + H(+). It carries out the reaction D-glycero-beta-D-manno-heptose 1-phosphate + ATP + H(+) = ADP-D-glycero-beta-D-manno-heptose + diphosphate. It participates in nucleotide-sugar biosynthesis; ADP-L-glycero-beta-D-manno-heptose biosynthesis; ADP-L-glycero-beta-D-manno-heptose from D-glycero-beta-D-manno-heptose 7-phosphate: step 1/4. Its pathway is nucleotide-sugar biosynthesis; ADP-L-glycero-beta-D-manno-heptose biosynthesis; ADP-L-glycero-beta-D-manno-heptose from D-glycero-beta-D-manno-heptose 7-phosphate: step 3/4. Catalyzes the phosphorylation of D-glycero-D-manno-heptose 7-phosphate at the C-1 position to selectively form D-glycero-beta-D-manno-heptose-1,7-bisphosphate. Its function is as follows. Catalyzes the ADP transfer from ATP to D-glycero-beta-D-manno-heptose 1-phosphate, yielding ADP-D-glycero-beta-D-manno-heptose. This is Bifunctional protein HldE from Chromohalobacter salexigens (strain ATCC BAA-138 / DSM 3043 / CIP 106854 / NCIMB 13768 / 1H11).